The following is a 565-amino-acid chain: Oxygen-dependent choline dehydrogenase (565 aa).

6-35 serves as a coordination point for FAD; it reads DYIIVGAGSAGNTLATRLTEDAGVTVLLLE. His475 acts as the Proton acceptor in catalysis.

Belongs to the GMC oxidoreductase family. The cofactor is FAD.

The catalysed reaction is choline + A = betaine aldehyde + AH2. It catalyses the reaction betaine aldehyde + NAD(+) + H2O = glycine betaine + NADH + 2 H(+). Its pathway is amine and polyamine biosynthesis; betaine biosynthesis via choline pathway; betaine aldehyde from choline (cytochrome c reductase route): step 1/1. In terms of biological role, involved in the biosynthesis of the osmoprotectant glycine betaine. Catalyzes the oxidation of choline to betaine aldehyde and betaine aldehyde to glycine betaine at the same rate. This chain is Oxygen-dependent choline dehydrogenase, found in Pseudomonas putida (strain ATCC 700007 / DSM 6899 / JCM 31910 / BCRC 17059 / LMG 24140 / F1).